An 833-amino-acid polypeptide reads, in one-letter code: Leucine--tRNA ligase (833 aa).

Positions 41 to 52 (PYPSGAGLHVGH) match the 'HIGH' region motif. Residues 610–614 (KMSKS) carry the 'KMSKS' region motif. Lysine 613 contacts ATP.

This sequence belongs to the class-I aminoacyl-tRNA synthetase family.

It localises to the cytoplasm. The catalysed reaction is tRNA(Leu) + L-leucine + ATP = L-leucyl-tRNA(Leu) + AMP + diphosphate. The protein is Leucine--tRNA ligase of Streptococcus agalactiae serotype III (strain NEM316).